A 466-amino-acid polypeptide reads, in one-letter code: tRNA modification GTPase MnmE (466 aa).

Residues Arg23, Glu86, and Lys125 each contribute to the (6S)-5-formyl-5,6,7,8-tetrahydrofolate site. The TrmE-type G domain occupies 221-388 (GIPVAIVGEP…LKNELLSFVN (168 aa)). Residue Asn231 coordinates K(+). GTP-binding positions include 231-236 (NVGKST), 250-256 (SDIAGTT), and 275-278 (DTAG). Ser235 is a Mg(2+) binding site. Residues Ser250, Ile252, and Thr255 each contribute to the K(+) site. Thr256 is a binding site for Mg(2+). Position 466 (Lys466) interacts with (6S)-5-formyl-5,6,7,8-tetrahydrofolate.

This sequence belongs to the TRAFAC class TrmE-Era-EngA-EngB-Septin-like GTPase superfamily. TrmE GTPase family. In terms of assembly, homodimer. Heterotetramer of two MnmE and two MnmG subunits. K(+) serves as cofactor.

It is found in the cytoplasm. Its function is as follows. Exhibits a very high intrinsic GTPase hydrolysis rate. Involved in the addition of a carboxymethylaminomethyl (cmnm) group at the wobble position (U34) of certain tRNAs, forming tRNA-cmnm(5)s(2)U34. This Flavobacterium johnsoniae (strain ATCC 17061 / DSM 2064 / JCM 8514 / BCRC 14874 / CCUG 350202 / NBRC 14942 / NCIMB 11054 / UW101) (Cytophaga johnsonae) protein is tRNA modification GTPase MnmE.